A 303-amino-acid polypeptide reads, in one-letter code: MWFKNLQIYRFTRPFELTVEQLETQLEACAFTPCGSQDISRFGWVKPLGKFGSTLTHSAAGHILICARKEEKMLPGTVVKEMLAEKVEAIEFEQGRALKKKEKEALKEEILHTLLPRAFSRTSQTFAWINPADNLMVVDAGSAKKADDLLALLRKSIGTLPVVPVALKNPPEITMTEWLNEGNLPASFTLEDEAELRSAMEHGGIIRCKQQDLMTDEIKNHLANDKLVTKLALNWGETLSFVLGDDLSIKRLKFSEELREQNDDVTSEDPAARLDADFALVTAELAQFIPALFAALGGEEQSI.

It belongs to the RdgC family.

The protein localises to the cytoplasm. It is found in the nucleoid. Functionally, may be involved in recombination. This Aeromonas hydrophila subsp. hydrophila (strain ATCC 7966 / DSM 30187 / BCRC 13018 / CCUG 14551 / JCM 1027 / KCTC 2358 / NCIMB 9240 / NCTC 8049) protein is Recombination-associated protein RdgC.